A 189-amino-acid chain; its full sequence is Ribosomal RNA large subunit methyltransferase E (189 aa).

Residues glycine 45, phenylalanine 47, aspartate 64, aspartate 82, and aspartate 104 each contribute to the S-adenosyl-L-methionine site. Residue lysine 144 is the Proton acceptor of the active site.

This sequence belongs to the class I-like SAM-binding methyltransferase superfamily. RNA methyltransferase RlmE family.

The protein localises to the cytoplasm. It catalyses the reaction uridine(2552) in 23S rRNA + S-adenosyl-L-methionine = 2'-O-methyluridine(2552) in 23S rRNA + S-adenosyl-L-homocysteine + H(+). Its function is as follows. Specifically methylates the uridine in position 2552 of 23S rRNA at the 2'-O position of the ribose in the fully assembled 50S ribosomal subunit. This is Ribosomal RNA large subunit methyltransferase E from Borreliella afzelii (strain PKo) (Borrelia afzelii).